Reading from the N-terminus, the 93-residue chain is Small ribosomal subunit protein uS19 (93 aa).

The interval 73 to 93 (EFSPTRTFRGHVKDDRKSKRR) is disordered. A compositionally biased stretch (basic and acidic residues) spans 83 to 93 (HVKDDRKSKRR).

Belongs to the universal ribosomal protein uS19 family.

Its function is as follows. Protein S19 forms a complex with S13 that binds strongly to the 16S ribosomal RNA. In Streptomyces avermitilis (strain ATCC 31267 / DSM 46492 / JCM 5070 / NBRC 14893 / NCIMB 12804 / NRRL 8165 / MA-4680), this protein is Small ribosomal subunit protein uS19.